A 595-amino-acid chain; its full sequence is uncharacterized protein (595 aa).

The N-terminal stretch at 1 to 23 (MLSLSSPPWLLLLVLFFFANGSA) is a signal peptide. N-linked (GlcNAc...) asparagine glycosylation is found at asparagine 31, asparagine 63, asparagine 88, asparagine 112, asparagine 144, asparagine 187, asparagine 205, asparagine 389, asparagine 480, asparagine 492, and asparagine 506. The segment covering 61–83 (LENQTASSSNLNTNNEASDEQTG) has biased composition (polar residues). Disordered regions lie at residues 61 to 119 (LENQ…VSSL) and 141 to 164 (TALN…TKGE). Residues 84–119 (NSNSNTSSHSRNINGLPSSNSNIDNANSNSSSVSSL) are compositionally biased toward low complexity.

The protein resides in the secreted. This is an uncharacterized protein from Drosophila melanogaster (Fruit fly).